Here is a 244-residue protein sequence, read N- to C-terminus: Ureidoacrylate amidohydrolase RutB (244 aa).

Residue D38 is the Proton acceptor of the active site. K147 is an active-site residue. The active-site Nucleophile is C180.

It belongs to the isochorismatase family. RutB subfamily.

It carries out the reaction (Z)-3-ureidoacrylate + H2O + H(+) = (Z)-3-aminoacrylate + NH4(+) + CO2. It catalyses the reaction (Z)-3-ureidoacrylate + H2O = (Z)-3-aminoacrylate + carbamate + H(+). The enzyme catalyses (Z)-2-methylureidoacrylate + H2O + H(+) = (Z)-2-methylaminoacrylate + NH4(+) + CO2. Functionally, hydrolyzes ureidoacrylate to form aminoacrylate and carbamate. The carbamate hydrolyzes spontaneously, thereby releasing one of the nitrogen atoms of the pyrimidine ring as ammonia and one of its carbon atoms as CO2. The chain is Ureidoacrylate amidohydrolase RutB from Shigella sonnei (strain Ss046).